The following is a 314-amino-acid chain: Deacetoxycephalosporin C synthase (314 aa).

Residues 156–269 (DCEPLLRLRY…RTSSVFFLRP (114 aa)) enclose the Fe2OG dioxygenase domain.

Belongs to the iron/ascorbate-dependent oxidoreductase family. Requires Fe cation as cofactor. L-ascorbate is required as a cofactor.

It catalyses the reaction penicillin N + 2-oxoglutarate + O2 = deacetoxycephalosporin C + succinate + CO2 + H2O. The protein operates within antibiotic biosynthesis; cephalosporin C biosynthesis. Functionally, catalyzes the step from penicillin N to deacetoxy-cephalosporin C. The protein is Deacetoxycephalosporin C synthase (cefE) of Amycolatopsis lactamdurans (Nocardia lactamdurans).